The chain runs to 237 residues: Cysteine-rich venom protein tigrin (237 aa).

An N-terminal signal peptide occupies residues 1-18 (MIVFILLSLAAVLRQSFG). Residues 37 to 165 (VNIHNSFRRS…LYNYFYVCQY (129 aa)) enclose the SCP domain. Intrachain disulfides connect Cys-74–Cys-152, Cys-91–Cys-166, Cys-147–Cys-163, Cys-185–Cys-192, Cys-188–Cys-197, Cys-201–Cys-232, Cys-210–Cys-226, and Cys-217–Cys-230. Residues 201 to 232 (CTHKDDYNNCNSLVSDCQSDWDKSHCPATCFC) form the ShKT domain.

This sequence belongs to the CRISP family. As to expression, expressed by the venom gland.

It is found in the secreted. Its function is as follows. This protein does not inhibit smooth muscle contraction elicited by high potassium levels or caffeine. In Rhabdophis tigrinus tigrinus (Tiger keelback snake), this protein is Cysteine-rich venom protein tigrin.